The primary structure comprises 142 residues: UPF0102 protein Bcep18194_A3391 (142 aa).

The tract at residues 1–27 is disordered; it reads MCHAAPARPGDGRGLPRAGDNFSGAAR.

The protein belongs to the UPF0102 family.

This chain is UPF0102 protein Bcep18194_A3391, found in Burkholderia lata (strain ATCC 17760 / DSM 23089 / LMG 22485 / NCIMB 9086 / R18194 / 383).